Here is a 105-residue protein sequence, read N- to C-terminus: MVSMTSDRIRIKLKAYDYRILDKAVTEIVDTARNTGAAIAGPIPLPTQISRTTIQRSVHVDKKSREQFEMRIHKRLLDILEPTQQTVDALGKLSLPAGVDVEIKL.

It belongs to the universal ribosomal protein uS10 family. As to quaternary structure, part of the 30S ribosomal subunit.

Involved in the binding of tRNA to the ribosomes. In Maridesulfovibrio salexigens (strain ATCC 14822 / DSM 2638 / NCIMB 8403 / VKM B-1763) (Desulfovibrio salexigens), this protein is Small ribosomal subunit protein uS10.